The following is a 1896-amino-acid chain: Trinucleotide repeat-containing gene 6A protein (1896 aa).

Composition is skewed to basic and acidic residues over residues 1 to 21 (MREL…RDLV) and 39 to 57 (KKKE…KVPE). 4 disordered regions span residues 1-137 (MREL…LLKR), 159-209 (SESS…DCST), 222-250 (EAWP…SESE), and 257-276 (ASGN…GLGS). The segment at 1–917 (MRELEAKATK…GDPPKCNQSL (917 aa)) is interaction with argonaute family proteins. Low complexity-rich tracts occupy residues 69–93 (ANSD…ASNQ) and 101–113 (QQPQ…QQPQ). The segment covering 125–137 (RFRHQEHKQLLKR) has biased composition (basic residues). The interval 239–488 (IDADSASNSE…QAPSVMNGTS (250 aa)) is sufficient for interaction with AGO1, AGO3 and AGO4. Sufficient for interaction with AGO2 stretches follow at residues 255 to 331 (VMAS…NAWG), 303 to 384 (GALI…STIG), 325 to 424 (NRMN…KVSF), 394 to 480 (SKVS…QIQA), and 487 to 736 (TSLS…NGTE). 2 stretches are compositionally biased toward polar residues: residues 396 to 410 (VSGS…SLQE) and 417 to 429 (SGTQ…GQPQ). Disordered regions lie at residues 396-461 (VSGS…NELP), 548-683 (FQVN…RRKI), 703-998 (LSNS…DPSK), 1011-1126 (IPEA…PTGW), and 1143-1182 (QELN…NKQE). A compositionally biased stretch (low complexity) spans 430 to 443 (NITTETTGPNNTTN). Over residues 444 to 461 (FMTSSLPNSGSVQNNELP) the composition is skewed to polar residues. Residues 551–1279 (NTNKGGGVWE…MFGVGNTAAQ (729 aa)) form a sufficient for interaction with AGO1 and AGO4 region. Residues 573 to 584 (SGNGANSGGSRR) are compositionally biased toward gly residues. 2 stretches are compositionally biased toward polar residues: residues 591–617 (QNTG…SANG) and 635–647 (GSAT…QNSV). Residues 665-683 (GRLEEKVTGESQSRDRRKI) are compositionally biased toward basic and acidic residues. Positions 703–722 (LSNSGWGQTPIKQNTAWDTE) are enriched in polar residues. Basic and acidic residues predominate over residues 723-733 (TSPRGERKTDN). Ser724 is subject to Phosphoserine. Residues 738–766 (WGSSATQTFNSGACTDKTSPNSNDTSSVS) show a composition bias toward polar residues. Positions 858–871 (SSSGGSDSDRSISG) are enriched in low complexity. Phosphoserine is present on Ser863. Composition is skewed to polar residues over residues 876–906 (GKTS…SSQG) and 924–937 (KPVS…QQDI). Position 976 is a phosphoserine (Ser976). 3 stretches are compositionally biased toward polar residues: residues 1033 to 1042 (AVSSKETSSG), 1054 to 1064 (TPATTVDNGTS), and 1082 to 1105 (AASN…SGPK). The interval 1059-1129 (VDNGTSAWGK…GSRPTGWEEE (71 aa)) is sufficient for interaction with AGO2. Residues 1143–1163 (QELNSSLNWPPYTKKMSSKGL) are compositionally biased toward low complexity. Phosphoserine is present on residues Ser1197 and Ser1255. 3 disordered regions span residues 1234 to 1256 (GDYN…ESSM), 1273 to 1306 (VGNT…PPPL), and 1360 to 1395 (QRAQ…QSRQ). 2 stretches are compositionally biased toward low complexity: residues 1284 to 1296 (QQPP…SSQP) and 1360 to 1376 (QRAQ…RQQQ). At Thr1406 the chain carries Phosphothreonine. Disordered stretches follow at residues 1512 to 1570 (MNSS…VTPG) and 1659 to 1685 (PKNI…WDNS). Ser1520 bears the Phosphoserine mark. Residues 1605-1896 (TSAWSSIRAS…DHLGGGGESM (292 aa)) are sufficient for interaction with AGO2. Residues 1716–1788 (NWLVLKNLTP…TTILAEFASE (73 aa)) enclose the RRM domain. Ser1804 and Ser1825 each carry phosphoserine.

The protein belongs to the GW182 family. As to quaternary structure, interacts with AGO2. Interacts with AGO1, AGO3 and AGO4. Interacts with CNOT1; the interaction is direct and mediates the association with the CCR4-NOT complex. Interacts with ZC3H12A. Interacts with SND1. Interacts with GARRE1.

The protein resides in the cytoplasm. Its subcellular location is the P-body. Functionally, plays a role in RNA-mediated gene silencing by both micro-RNAs (miRNAs) and short interfering RNAs (siRNAs). Required for miRNA-dependent repression of translation and for siRNA-dependent endonucleolytic cleavage of complementary mRNAs by argonaute family proteins. As a scaffolding protein, associates with argonaute proteins bound to partially complementary mRNAs, and can simultaneously recruit CCR4-NOT and PAN deadenylase complexes. This Mus musculus (Mouse) protein is Trinucleotide repeat-containing gene 6A protein (Tnrc6a).